Here is a 1093-residue protein sequence, read N- to C-terminus: MAFFSKFLNIKSTEMRIAEKSLKRINDLEKYVINNTDEELRSKTQFFKDLLKEGYKLEDIRDEVFAVAREATKRVLGKRPYDVQILGGILLDLGSVAEMKTGEGKTITSIAPVYLNALSGKGAIVSTVNEYLTERDAQEMGQVFNYLGLSVGINKAQMDPNLKRYAYSCDITYSVHSELGFDYLRDNMVSDMSEKVQRELNFCLIDEVDSILIDEAKTPLIISGGEANDSSSYYSADQFVRTLNNDDFLVDEESKAVTLTASGIEKANSFFRIDDLYNIEHSEKVHLIQNALRAHKVFKIDVEYIVKNNKIELVDAFTGRIMEGRSYSEGLQQAIQAKEMVEIEPETQTLATITYQNFFRMFNKLCGMTGTGKTEEQEFIDIYNMRVNVVPTNKPIAREDAPDLIFATAKDKWEAVGKEVERLYQKGQPVLVGTAQIEDSEIIHRILIEKNVPHTVLNAKQDKALEAEIIAQAGVKGAVTIATNMAGRGTDIKPSKEALELGGLYVLGTDKAESRRIDNQLRGRSGRQGDVGISRFYISLEDQLIMRFANFEAFQEVYAKDAGKEITNKQLRFAFNNAQKKIEGFNYDSRKSVLNYDDVIRQQRDLIYSQRDLLLISNEFEEIIRRMIKVFVKNLVAIEDHKLKSGAYDYQKLVDFLNKNIAVYIKHDFNVDEFKRIHDNELVDKVNQMVNDIYNQWLANAIEKTDQAYIDNFKKQVLLKTLDDNWKKHINKMDKLRSNVNLVQYSQKNPYQIYTDEGTKMFEDLIQTIAFESVLKVFSSPLGEKSLITAEIKNDPLYQQVASTFEYNPYLSISEQEKQLLERYNNVKQRLNEVEQQNLQEQSYKDPASDNLENNPEPKTGSQSQSEHEMVLTPDTVIDPSIDTNQWFEEINIDDFINVTKKDSELESKEKEQEEVKNQETQPKENKPAETKVDATKNQENVSEELKAKEVATVVEEKPKKVSKAKSEKLKVAKKVKPKDLESKEKPKSDKAKKSLAKKETQKPKKPKITSEVKIAKVEKTNKKAKAQDKPKAKVTKAKETKPKTEVKADKVKTKTAKTSEAKAQKVEAENFVNKIVFPKNKIDLKLEKIKLK.

Residues glutamine 84, 102 to 106 (GEGKT), and aspartate 491 each bind ATP. Disordered regions lie at residues 837–869 (QNLQEQSYKDPASDNLENNPEPKTGSQSQSEHE) and 904–1062 (SELE…TSEA). 3 stretches are compositionally biased toward basic and acidic residues: residues 904–937 (SELESKEKEQEEVKNQETQPKENKPAETKVDATK), 944–971 (EELKAKEVATVVEEKPKKVSKAKSEKLK), and 978–1062 (PKDL…TSEA).

It belongs to the SecA family. As to quaternary structure, monomer and homodimer. Part of the essential Sec protein translocation apparatus which comprises SecA, SecYEG and auxiliary proteins SecDF. Other proteins may also be involved.

It localises to the cell membrane. Its subcellular location is the cytoplasm. The enzyme catalyses ATP + H2O + cellular proteinSide 1 = ADP + phosphate + cellular proteinSide 2.. Its function is as follows. Part of the Sec protein translocase complex. Interacts with the SecYEG preprotein conducting channel. Has a central role in coupling the hydrolysis of ATP to the transfer of proteins into and across the cell membrane, serving as an ATP-driven molecular motor driving the stepwise translocation of polypeptide chains across the membrane. In Mycoplasmopsis synoviae (strain 53) (Mycoplasma synoviae), this protein is Protein translocase subunit SecA.